The sequence spans 396 residues: Elongation factor Tu 2 (396 aa).

A tr-type G domain is found at 10 to 206 (KLHVNVGTIG…ALDTFIPDPT (197 aa)). A G1 region spans residues 19–26 (GHVDHGKT). Position 19–26 (19–26 (GHVDHGKT)) interacts with GTP. T26 contributes to the Mg(2+) binding site. The G2 stretch occupies residues 60–64 (GITIS). Residues 81–84 (DCPG) are G3. GTP contacts are provided by residues 81–85 (DCPGH) and 136–139 (NKAD). Residues 136 to 139 (NKAD) are G4. The tract at residues 174 to 176 (SAR) is G5.

The protein belongs to the TRAFAC class translation factor GTPase superfamily. Classic translation factor GTPase family. EF-Tu/EF-1A subfamily. Monomer.

The protein resides in the cytoplasm. It carries out the reaction GTP + H2O = GDP + phosphate + H(+). GTP hydrolase that promotes the GTP-dependent binding of aminoacyl-tRNA to the A-site of ribosomes during protein biosynthesis. The sequence is that of Elongation factor Tu 2 from Xanthomonas campestris pv. campestris (strain 8004).